The chain runs to 473 residues: Serine carboxypeptidase-like 25 (473 aa).

Residues Met-1–Gly-22 form the signal peptide. N-linked (GlcNAc...) asparagine glycans are attached at residues Asn-46 and Asn-143. 3 disulfide bridges follow: Cys-92-Cys-358, Cys-252-Cys-263, and Cys-288-Cys-326. Ser-185 is a catalytic residue. 4 N-linked (GlcNAc...) asparagine glycosylation sites follow: Asn-289, Asn-299, Asn-347, and Asn-367. Residues Asp-395 and His-447 contribute to the active site.

It belongs to the peptidase S10 family. Ubiquitous.

The protein resides in the secreted. In terms of biological role, probable carboxypeptidase. In Arabidopsis thaliana (Mouse-ear cress), this protein is Serine carboxypeptidase-like 25 (SCPL25).